A 29-amino-acid chain; its full sequence is Cytochrome b6-f complex subunit 8 (29 aa).

A helical membrane pass occupies residues 3 to 23; that stretch reads ILTLGWVSLLVVFTWSIAMVV.

It belongs to the PetN family. In terms of assembly, the 4 large subunits of the cytochrome b6-f complex are cytochrome b6, subunit IV (17 kDa polypeptide, PetD), cytochrome f and the Rieske protein, while the 4 small subunits are PetG, PetL, PetM and PetN. The complex functions as a dimer.

It is found in the cellular thylakoid membrane. Its function is as follows. Component of the cytochrome b6-f complex, which mediates electron transfer between photosystem II (PSII) and photosystem I (PSI), cyclic electron flow around PSI, and state transitions. This Nostoc punctiforme (strain ATCC 29133 / PCC 73102) protein is Cytochrome b6-f complex subunit 8.